A 292-amino-acid chain; its full sequence is Ribosomal protein L11 methyltransferase (292 aa).

S-adenosyl-L-methionine-binding residues include Thr145, Gly166, Asp188, and Asn229.

Belongs to the methyltransferase superfamily. PrmA family.

Its subcellular location is the cytoplasm. It carries out the reaction L-lysyl-[protein] + 3 S-adenosyl-L-methionine = N(6),N(6),N(6)-trimethyl-L-lysyl-[protein] + 3 S-adenosyl-L-homocysteine + 3 H(+). Functionally, methylates ribosomal protein L11. In Pseudoalteromonas atlantica (strain T6c / ATCC BAA-1087), this protein is Ribosomal protein L11 methyltransferase.